The chain runs to 314 residues: Ferrochelatase (314 aa).

Fe cation is bound by residues His184 and Glu259.

The protein belongs to the ferrochelatase family.

The protein localises to the cytoplasm. It carries out the reaction heme b + 2 H(+) = protoporphyrin IX + Fe(2+). The protein operates within porphyrin-containing compound metabolism; protoheme biosynthesis; protoheme from protoporphyrin-IX: step 1/1. In terms of biological role, catalyzes the ferrous insertion into protoporphyrin IX. The protein is Ferrochelatase of Chlamydia trachomatis serovar A (strain ATCC VR-571B / DSM 19440 / HAR-13).